We begin with the raw amino-acid sequence, 199 residues long: Probable molybdenum cofactor guanylyltransferase (199 aa).

GTP is bound by residues 6–8 (LAG), K18, D65, and D97. D97 provides a ligand contact to Mg(2+).

This sequence belongs to the MobA family. The cofactor is Mg(2+).

Its subcellular location is the cytoplasm. It catalyses the reaction Mo-molybdopterin + GTP + H(+) = Mo-molybdopterin guanine dinucleotide + diphosphate. Its function is as follows. Transfers a GMP moiety from GTP to Mo-molybdopterin (Mo-MPT) cofactor (Moco or molybdenum cofactor) to form Mo-molybdopterin guanine dinucleotide (Mo-MGD) cofactor. The chain is Probable molybdenum cofactor guanylyltransferase from Staphylococcus aureus (strain COL).